The primary structure comprises 613 residues: Zinc metalloproteinase-disintegrin-like atragin (613 aa).

Positions 1-20 (MIQALLVIICLAVFPHQGSS) are cleaved as a signal peptide. Residues 21–191 (IILESGNVND…DESIEKTSQL (171 aa)) constitute a propeptide that is removed on maturation. Residues 205–400 (KYIEFYVVVD…DRPQCILNKP (196 aa)) form the Peptidase M12B domain. Ca(2+) is bound by residues E208 and D292. 2 disulfides stabilise this stretch: C316–C395 and C356–C379. H341, H345, and H351 together coordinate Zn(2+). C395, N398, I410, N413, F415, E417, E420, and D423 together coordinate Ca(2+). Positions 408–494 (PPICGNYFVE…ECPTDVFQRN (87 aa)) constitute a Disintegrin domain. Intrachain disulfides connect C411–C440, C422–C435, C424–C430, C434–C457, C448–C454, C453–C479, C466–C486, C473–C505, C498–C510, C517–C567, C532–C575, C542–C577, C545–C555, C562–C601, and C595–C606. N436 is a glycosylation site (N-linked (GlcNAc...) asparagine). The D/ECD-tripeptide signature appears at 472–474 (DCD). Residues D474, L475, E477, D489, and V490 each coordinate Ca(2+). The interval 560–574 (VKCGRLFCKRRNSMI) is hypervariable region that may play important roles toward cell migration.

Belongs to the venom metalloproteinase (M12B) family. P-III subfamily. P-IIIa sub-subfamily. As to quaternary structure, monomer. It depends on Zn(2+) as a cofactor. Expressed by the venom gland.

The protein resides in the secreted. Its function is as follows. Snake venom zinc metalloproteinase that seems to inhibit cell migration. This activity is dominated by the local structure of the hyper-variable region. The protein is Zinc metalloproteinase-disintegrin-like atragin of Naja atra (Chinese cobra).